The following is a 529-amino-acid chain: MSLNDYPQQVNKRRTFAIISHPDAGKTTITEKVLLYGNAIQTAGSVKGKGSQAHAKSDWMEMEKQRGISITTSVMQFPYNDCLVNLLDTPGHEDFSEDTYRTLTAVDSCLMVIDAAKGVEERTIKLMEVTRLRDTPILTFMNKLDRDIRDPMELLDEVESVLKIHCAPITWPIGCGKLFKGVYHLYKDETYLYQTGQGSTIQEVKIVKGLNNPELDNAVGDDLAQQLRDELELVKGASNEFDHELFIGGELTPVFFGTALGNFGVDHFLDGLTEWAPKPQPRQADTRIVESSEEKLTGFVFKIQANMDPKHRDRVAFMRVVSGKYEKGMKLKHVRIGKDVVISDALTFMAGDRAHAEEAYAGDIIGLHNHGTIQIGDTFTQGEDLKFTGIPNFAPELFRRIRLKDPLKQKQLLKGLVQLSEEGAVQVFRPMMNNDLIVGAVGVLQFDVVVSRLKTEYNVEAIYENVNVATARWVECADSKKFEEFKRKNEQNLALDGGDNLTYIAPTMVNLNLAQERYPDVTFFKTREH.

Residues 11–280 (NKRRTFAIIS…GLTEWAPKPQ (270 aa)) form the tr-type G domain. GTP-binding positions include 20–27 (SHPDAGKT), 88–92 (DTPGH), and 142–145 (NKLD).

This sequence belongs to the TRAFAC class translation factor GTPase superfamily. Classic translation factor GTPase family. PrfC subfamily.

The protein resides in the cytoplasm. Functionally, increases the formation of ribosomal termination complexes and stimulates activities of RF-1 and RF-2. It binds guanine nucleotides and has strong preference for UGA stop codons. It may interact directly with the ribosome. The stimulation of RF-1 and RF-2 is significantly reduced by GTP and GDP, but not by GMP. This is Peptide chain release factor 3 from Mannheimia succiniciproducens (strain KCTC 0769BP / MBEL55E).